We begin with the raw amino-acid sequence, 555 residues long: Glutamine--tRNA ligase (555 aa).

The short motif at 34–44 (PEPNGFLHIGH) is the 'HIGH' region element. ATP contacts are provided by residues 35 to 37 (EPN) and 41 to 47 (HIGHAKS). L-glutamine contacts are provided by aspartate 67 and tyrosine 212. Residues threonine 231, 261 to 262 (RL), and 269 to 271 (LSK) contribute to the ATP site. The short motif at 268–272 (VLSKR) is the 'KMSKS' region element.

The protein belongs to the class-I aminoacyl-tRNA synthetase family. In terms of assembly, monomer.

The protein resides in the cytoplasm. It catalyses the reaction tRNA(Gln) + L-glutamine + ATP = L-glutaminyl-tRNA(Gln) + AMP + diphosphate. This chain is Glutamine--tRNA ligase, found in Alteromonas mediterranea (strain DSM 17117 / CIP 110805 / LMG 28347 / Deep ecotype).